We begin with the raw amino-acid sequence, 113 residues long: Large ribosomal subunit protein bL19 (113 aa).

Belongs to the bacterial ribosomal protein bL19 family.

Functionally, this protein is located at the 30S-50S ribosomal subunit interface and may play a role in the structure and function of the aminoacyl-tRNA binding site. This chain is Large ribosomal subunit protein bL19, found in Moorella thermoacetica (strain ATCC 39073 / JCM 9320).